The chain runs to 550 residues: Centrosomal and chromosomal factor (550 aa).

3 coiled-coil regions span residues 20–44 (SALSALQQQQQQQQQQHSQTQQQHH), 105–126 (VANSRQQQQQQQQQQQQQQQQQ), and 239–274 (ATSAQQQQQQQQRYQQQQQQLRQQHQQMSQMSQQAH). Disordered stretches follow at residues 21–145 (ALSA…KDYS), 208–320 (LSSG…HAAN), 361–380 (SHYAAKGSGGGAGGGKRDAM), and 392–465 (SGKL…SASV). Composition is skewed to low complexity over residues 24–71 (ALQQ…QQQQ), 81–136 (ANTS…NAAP), and 221–320 (AAVA…HAAN). Low complexity-rich tracts occupy residues 396–412 (QQSQVQQQQPQQQQQHC) and 450–462 (SATPTAGAASGGS).

In terms of assembly, homodimer. Interacts with esc, Trl, E(z), scm and ph-p in vitro. Found in vivo in an esc-containing complex, which may be the Esc/E(z) complex. Also found in vivo in a Pc-containing complex that may be the PRC1 complex, but does not interact with Pc directly. Interacts with cyclin CycG.

It localises to the nucleus. Its subcellular location is the cytoplasm. The protein resides in the cytoskeleton. It is found in the microtubule organizing center. The protein localises to the centrosome. It localises to the chromosome. Its function is as follows. Essential protein required for proper condensation of mitotic chromosomes and progression through mitosis. Binds to specific polytene chromosome sites, many of which are shared with the posterior sex combs (Psc) protein. Involved in maintaining Abd-B repression outside its normal expression domain. The polypeptide is Centrosomal and chromosomal factor (corto) (Drosophila melanogaster (Fruit fly)).